A 227-amino-acid chain; its full sequence is Small ribosomal subunit protein uS3 (227 aa).

Residues 39-108 form the KH type-2 domain; it reads IRKFIEERYK…EVIVNVDEVK (70 aa).

The protein belongs to the universal ribosomal protein uS3 family. Part of the 30S ribosomal subunit. Forms a tight complex with proteins S10 and S14.

Binds the lower part of the 30S subunit head. Binds mRNA in the 70S ribosome, positioning it for translation. This is Small ribosomal subunit protein uS3 from Sulfurihydrogenibium sp. (strain YO3AOP1).